The primary structure comprises 151 residues: Endoribonuclease YbeY (151 aa).

Residues histidine 108, histidine 112, and aspartate 118 each contribute to the Zn(2+) site.

This sequence belongs to the endoribonuclease YbeY family. Requires Zn(2+) as cofactor.

The protein localises to the cytoplasm. In terms of biological role, single strand-specific metallo-endoribonuclease involved in late-stage 70S ribosome quality control and in maturation of the 3' terminus of the 16S rRNA. This Porphyromonas gingivalis (strain ATCC 33277 / DSM 20709 / CIP 103683 / JCM 12257 / NCTC 11834 / 2561) protein is Endoribonuclease YbeY.